The chain runs to 330 residues: Replication factor C small subunit (330 aa).

48–55 (GPPGTGKT) contributes to the ATP binding site.

Belongs to the activator 1 small subunits family. RfcS subfamily. As to quaternary structure, heteropentamer composed of four small subunits (RfcS) and one large subunit (RfcL). A homotetramer of this subunit interacts with PCNA heterodimer PCNA1-PCNA2.

Functionally, part of the RFC clamp loader complex which loads the PCNA sliding clamp onto DNA. The complex possesses DNA-dependent ATPase activity. This is Replication factor C small subunit (rfcS) from Saccharolobus solfataricus (strain ATCC 35092 / DSM 1617 / JCM 11322 / P2) (Sulfolobus solfataricus).